Here is an 896-residue protein sequence, read N- to C-terminus: MYCRESLSSLQTLNVAKSLSSLFPKQSALINPISAGRRNNLPRPNLRRRCKVTASRANIEQEGNTVKEPIQNIKVKGYITAQEEFLEGITWSRGLDDIADIRGRSLLVELISAKTDQRITVEDYAQRVWAEAPDEKYECEFEMPEDFGPVGAIKIQNQYHRQLFLKGVELKLPGGSITFTCESWVAPKSVDPTKRIFFSDKSYLPSQTPEPLKKYRKEELETLQGKNREEVGEFTKFERIYDYDVYNDVGDPDNDPELARPVIGGLTHPYPRRCKTGRKPCETDPSSEQRYGGEFYVPRDEEFSTAKGTSFTGKAVLAALPSIFPQIESVLLSPQEPFPHFKAIQNLFEEGIQLPKDAGLLPLLPRIIKALGEAQDDILQFDAPVLINRDRFSWLRDDEFARQTLAGLNPYSIQLVEEWPLISKLDPAVYGDPTSLITWEIVEREVKGNMTVDEALKNKRLFVLDYHDLLLPYVNKVRELNNTTLYASRTLFFLSDDSTLRPVAIELTCPPNINKPQWKQVFTPGYDATSCWLWNLAKTHAISHDAGYHQLISHWLRTHACTEPYIIAANRQLSAMHPIYRLLHPHFRYTMEINARARQSLVNGGGIIETCFWPGKYALELSSAVYGKLWRFDQEGLPADLIKRGLAEEDKTAEHGVRLTIPDYPFANDGLILWDAIKEWVTDYVKHYYPDEELITSDEELQGWWSEVRNIGHGDKKDEPWWPVLKTQDDLIGVVTTIAWVTSGHHAAVNFGQYGYGGYFPNRPTTTRIRMPTEDPTDEALKEFYESPEKVLLKTYPSQKQATLVMVTLDLLSTHSPDEEYIGEQQEASWANEPVINAAFERFKGKLQYLEGVIDERNVNITLKNRAGAGVVKYELLKPTSEHGVTGMGVPYSISI.

The N-terminal 56 residues, 1 to 56 (MYCRESLSSLQTLNVAKSLSSLFPKQSALINPISAGRRNNLPRPNLRRRCKVTASR), are a transit peptide targeting the chloroplast. The 121-residue stretch at 79 to 199 (ITAQEEFLEG…VDPTKRIFFS (121 aa)) folds into the PLAT domain. The interval 175–232 (GSITFTCESWVAPKSVDPTKRIFFSDKSYLPSQTPEPLKKYRKEELETLQGKNREEVG) is EIF4E2 binding. The Lipoxygenase domain maps to 202–896 (SYLPSQTPEP…GMGVPYSISI (695 aa)). Positions 554, 559, 746, 750, and 896 each coordinate Fe cation.

This sequence belongs to the lipoxygenase family. In terms of assembly, interacts with EIF4E2. Requires Fe cation as cofactor. In leaves and inflorescences but not abundant in seeds, roots and stems.

It localises to the plastid. The protein resides in the chloroplast. Its subcellular location is the cytoplasm. The enzyme catalyses (9Z,12Z)-octadecadienoate + O2 = (13S)-hydroperoxy-(9Z,11E)-octadecadienoate. The catalysed reaction is (9Z,12Z,15Z)-octadecatrienoate + O2 = (13S)-hydroperoxy-(9Z,11E,15Z)-octadecatrienoate. It functions in the pathway lipid metabolism; oxylipin biosynthesis. In terms of biological role, 13S-lipoxygenase that can use linolenic acid as substrates. Plant lipoxygenases may be involved in a number of diverse aspects of plant physiology including growth and development, pest resistance, and senescence or responses to wounding. Catalyzes the hydroperoxidation of lipids containing a cis,cis-1,4-pentadiene structure. Required for the wound-induced synthesis of jasmonic acid (JA) in leaves. This Arabidopsis thaliana (Mouse-ear cress) protein is Lipoxygenase 2, chloroplastic (LOX2).